The following is a 377-amino-acid chain: Succinyl-diaminopimelate desuccinylase (377 aa).

Residue histidine 66 coordinates Zn(2+). Aspartate 68 is an active-site residue. Aspartate 99 provides a ligand contact to Zn(2+). Glutamate 133 serves as the catalytic Proton acceptor. Residues glutamate 134, glutamate 162, and histidine 348 each coordinate Zn(2+).

The protein belongs to the peptidase M20A family. DapE subfamily. In terms of assembly, homodimer. Zn(2+) is required as a cofactor. Co(2+) serves as cofactor.

The catalysed reaction is N-succinyl-(2S,6S)-2,6-diaminopimelate + H2O = (2S,6S)-2,6-diaminopimelate + succinate. Its pathway is amino-acid biosynthesis; L-lysine biosynthesis via DAP pathway; LL-2,6-diaminopimelate from (S)-tetrahydrodipicolinate (succinylase route): step 3/3. Functionally, catalyzes the hydrolysis of N-succinyl-L,L-diaminopimelic acid (SDAP), forming succinate and LL-2,6-diaminopimelate (DAP), an intermediate involved in the bacterial biosynthesis of lysine and meso-diaminopimelic acid, an essential component of bacterial cell walls. This is Succinyl-diaminopimelate desuccinylase from Marinomonas sp. (strain MWYL1).